Here is a 156-residue protein sequence, read N- to C-terminus: Arginine repressor (156 aa).

Belongs to the ArgR family.

It localises to the cytoplasm. It participates in amino-acid biosynthesis; L-arginine biosynthesis [regulation]. Regulates arginine biosynthesis genes. The protein is Arginine repressor of Photobacterium profundum (strain SS9).